The primary structure comprises 620 residues: Ferric/cupric reductase transmembrane component 7 (620 aa).

Residues 1-45 (MIEERDLVLSNGIHCIADIHSELYARLKKESQAATPWVYQKQYGK) lie on the Extracellular side of the membrane. Residues 46 to 66 (FVTYFVAVIIFLSLIKKLAFM) form a helical membrane-spanning segment. Over 67 to 107 (YYDSSEEFLPEKKNSPTTPSVFLARIMTKLVAFNRYICYRK) the chain is Cytoplasmic. A helical transmembrane segment spans residues 108-128 (FPTLIFSYLGIPTSVGTFLVV). Over 129–167 (MATTLYTLLYCFVPHPFYRPCAGFGSPPLSVRAGIMAIS) the chain is Extracellular. The region spanning 161–320 (AGIMAISLVP…LAVKGYLRPG (160 aa)) is the Ferric oxidoreductase domain. The helical transmembrane segment at 168 to 188 (LVPFVFSLSGKINVIGWLVGL) threads the bilayer. The Cytoplasmic portion of the chain corresponds to 189-194 (SYEKIN). The helical transmembrane segment at 195-215 (IYHQWASILCLFFSWVHVIPF) threads the bilayer. Heme is bound by residues histidine 197 and histidine 211. The Extracellular portion of the chain corresponds to 216 to 237 (LRQARHEGGYERMHQRWKASDM). Residues 238 to 258 (WRSGVPPILFLNLLWLSSLPI) traverse the membrane as a helical segment. Residues 259–265 (ARRHFYE) are Cytoplasmic-facing. A helical transmembrane segment spans residues 266–286 (IFLQLHWILAVGFYISLFYHV). Heme contacts are provided by histidine 271 and histidine 285. Topologically, residues 287-292 (YPELNS) are extracellular. The helical transmembrane segment at 293–313 (HMYLVATIVVWFAQLFYRLAV) threads the bilayer. The Cytoplasmic portion of the chain corresponds to 314–620 (KGYLRPGRSF…CYLHSESFGY (307 aa)). Positions 321 to 419 (RSFMASTIAN…DGPYGGIERD (99 aa)) constitute an FAD-binding FR-type domain. 369–375 (HPFSIFP) is an FAD binding site. 411–414 (GPYG) lines the NADP(+) pocket. Residues 519 to 543 (SDQSDLAKREKDTEFGQDDTESNST) form a disordered region. Basic and acidic residues predominate over residues 523–532 (DLAKREKDTE). An NADP(+)-binding site is contributed by 578 to 579 (CF).

This sequence belongs to the ferric reductase (FRE) family. FAD serves as cofactor.

It localises to the cell membrane. The enzyme catalyses 2 a Fe(II)-siderophore + NADP(+) + H(+) = 2 a Fe(III)-siderophore + NADPH. Its function is as follows. Cell surface metalloreductase. May be involved in copper homeostasis. This Saccharomyces cerevisiae (strain ATCC 204508 / S288c) (Baker's yeast) protein is Ferric/cupric reductase transmembrane component 7 (FRE7).